The primary structure comprises 117 residues: Large ribosomal subunit protein bL20 (117 aa).

The protein belongs to the bacterial ribosomal protein bL20 family.

Binds directly to 23S ribosomal RNA and is necessary for the in vitro assembly process of the 50S ribosomal subunit. It is not involved in the protein synthesizing functions of that subunit. The polypeptide is Large ribosomal subunit protein bL20 (Natranaerobius thermophilus (strain ATCC BAA-1301 / DSM 18059 / JW/NM-WN-LF)).